We begin with the raw amino-acid sequence, 1042 residues long: Kinesin-like protein KIN-5A (1042 aa).

The segment covering M1–S14 has biased composition (low complexity). The tract at residues M1–K45 is disordered. Residues S21–V31 are compositionally biased toward basic and acidic residues. Residues D32–S41 show a composition bias toward polar residues. Residues N50–I392 form the Kinesin motor domain. Position 136–143 (G136–T143) interacts with ATP. Positions T480–E517 form a coiled coil. Residues K1021–N1042 form a disordered region.

Belongs to the TRAFAC class myosin-kinesin ATPase superfamily. Kinesin family. KIN-5/BimC subfamily.

Its subcellular location is the cytoplasm. The protein resides in the cytoskeleton. It is found in the spindle. Responsible for microtubule translocation. May be important for the organization of phragmoplast-specific arrays of microtubules. Plays an essential role in stabilizing the mitotic spindle. Required during mitotic cytokinesis. The polypeptide is Kinesin-like protein KIN-5A (Arabidopsis thaliana (Mouse-ear cress)).